The sequence spans 760 residues: BMP/retinoic acid-inducible neural-specific protein 1 (760 aa).

The signal sequence occupies residues 1–16 (MNWRFVELLYFLFVWG). The MACPF domain occupies 68-251 (RYKIYREFAR…FVQSALSYIM (184 aa)). N-linked (GlcNAc...) asparagine glycans are attached at residues Asn156, Asn433, Asn443, Asn553, Asn599, Asn630, and Asn676.

This sequence belongs to the BRINP family.

The protein resides in the cytoplasm. Its function is as follows. Plays a role in neurogenesis and brain development. May suppress cell cycle progression in postmitotic neurons by inhibiting G1/S transition. This is BMP/retinoic acid-inducible neural-specific protein 1 (Brinp1) from Rattus norvegicus (Rat).